Reading from the N-terminus, the 81-residue chain is ATP synthase subunit c, chloroplastic (81 aa).

Transmembrane regions (helical) follow at residues 3 to 23 and 57 to 77; these read PLVFAASVIAAGLAVGLASIG and LAFMEALTIYGLVVALALLFA.

Belongs to the ATPase C chain family. F-type ATPases have 2 components, F(1) - the catalytic core - and F(0) - the membrane proton channel. F(1) has five subunits: alpha(3), beta(3), gamma(1), delta(1), epsilon(1). F(0) has four main subunits: a(1), b(1), b'(1) and c(10-14). The alpha and beta chains form an alternating ring which encloses part of the gamma chain. F(1) is attached to F(0) by a central stalk formed by the gamma and epsilon chains, while a peripheral stalk is formed by the delta, b and b' chains.

The protein localises to the plastid. The protein resides in the chloroplast thylakoid membrane. Functionally, f(1)F(0) ATP synthase produces ATP from ADP in the presence of a proton or sodium gradient. F-type ATPases consist of two structural domains, F(1) containing the extramembraneous catalytic core and F(0) containing the membrane proton channel, linked together by a central stalk and a peripheral stalk. During catalysis, ATP synthesis in the catalytic domain of F(1) is coupled via a rotary mechanism of the central stalk subunits to proton translocation. Its function is as follows. Key component of the F(0) channel; it plays a direct role in translocation across the membrane. A homomeric c-ring of between 10-14 subunits forms the central stalk rotor element with the F(1) delta and epsilon subunits. The protein is ATP synthase subunit c, chloroplastic of Atropa belladonna (Belladonna).